A 257-amino-acid chain; its full sequence is Nickel import system ATP-binding protein NikD (257 aa).

The ABC transporter domain maps to 4 to 245 (IDIQNLTIKN…HLHPYTEQLI (242 aa)). ATP is bound at residue 37–44 (GESGAGKS).

The protein belongs to the ABC transporter superfamily. The complex is composed of two ATP-binding proteins (NikD and NikE), two transmembrane proteins (NikB and NikC) and a solute-binding protein (NikA).

Its subcellular location is the cell membrane. The enzyme catalyses Ni(2+)(out) + ATP + H2O = Ni(2+)(in) + ADP + phosphate + H(+). Functionally, part of the ABC transporter complex NikABCDE (Opp2) involved in nickel import. Probably responsible for energy coupling to the transport system. The protein is Nickel import system ATP-binding protein NikD of Staphylococcus aureus (strain bovine RF122 / ET3-1).